The following is an 863-amino-acid chain: DNA mismatch repair protein MutS (863 aa).

607–614 serves as a coordination point for ATP; the sequence is GPNMAGKS.

It belongs to the DNA mismatch repair MutS family.

In terms of biological role, this protein is involved in the repair of mismatches in DNA. It is possible that it carries out the mismatch recognition step. This protein has a weak ATPase activity. The protein is DNA mismatch repair protein MutS of Caldicellulosiruptor bescii (strain ATCC BAA-1888 / DSM 6725 / KCTC 15123 / Z-1320) (Anaerocellum thermophilum).